The following is a 311-amino-acid chain: Retron Ec78 reverse transcriptase (311 aa).

The 227-residue stretch at 15 to 241 (DSGISAFLVT…HNRHVTGVTI (227 aa)) folds into the Reverse transcriptase domain. Mg(2+) contacts are provided by Asp-96, Asp-187, and Asp-188.

The protein belongs to the bacterial reverse transcriptase family.

The catalysed reaction is DNA(n) + a 2'-deoxyribonucleoside 5'-triphosphate = DNA(n+1) + diphosphate. In terms of biological role, reverse transcriptase (RT) component of antiviral defense system retron Ec78, composed of a non-coding RNA (ncRNA), this reverse transcriptase (RT), a probable ATPase and a putative HNH endonuclease. Expression of retron Ec78 confers protection against bacteriophage T5. At multiplicity of infection (MOI) of 0.02 cultures slow growth when infected with T5 but do not collapse, at MOI 2 cultures enter growth stasis. Responsible for synthesis of msDNA-Ec78 (a linear ssDNA with a 5'-terminal phosphate residue). Unlike most known msDNAs the mature product does not have an RNA component. The retron transcript serves as primer and template for the reaction, and codes for the RT. Not mutagenic when cloned in E.coli. It is thought to be synthesized as a branched RNA with a 2',5'-phosphodiester linkage to ssDNA; the linkage is cleaved endonucleolytically by ExoVII (xseA-xseB) leaving the observed mature 5'-ssDNA terminus. Overexpression of the ncRNA and RT, which leads to increased levels of msDNA, is not mutagenic in vivo. As the stem in the msDNA does not have a mismatch it probably does not bind or sequester MutS and/or MutL. In Escherichia coli, this protein is Retron Ec78 reverse transcriptase.